We begin with the raw amino-acid sequence, 351 residues long: Purine permease 3 (351 aa).

10 helical membrane-spanning segments follow: residues 4–24 (ALVIINCIILAIGNCGGPLIM), 35–55 (IWFSTFLETAGFPVIFIPLLF), 72–92 (FFLIKPRLLIAAVIVGILSGF), 108–128 (TAALIIASQLAFIAIFSFFMV), 132–152 (FTPFTINAVVLLTVGAAVLGM), 168–188 (ITGFLITVAAAVMYAFILPLV), 207–227 (FQLILCLLASIVSVIGMFIAG), 249–269 (VAVFSAIIWQGFFLGAIGLIF), 274–294 (LVSGIMISVLLPITEVLAVIF), and 304–324 (GLSLALSLWGFVSYFYGEIKS). The EamA domain maps to 45–152 (GFPVIFIPLL…LTVGAAVLGM (108 aa)). The tract at residues 329–351 (RRIQQEESQETEQSSLSRPISEC) is disordered.

The protein belongs to the purine permeases (TC 2.A.7.14) family. As to expression, restricted to pollen.

The protein localises to the membrane. May be involved in transport of purine derivatives during pollen germination and tube elongation. The protein is Purine permease 3 (PUP3) of Arabidopsis thaliana (Mouse-ear cress).